A 598-amino-acid chain; its full sequence is Probable ATP-dependent RNA helicase DDX52 (598 aa).

Position 15 is an N6-acetyllysine (K15). At S39 the chain carries Phosphoserine. The Q motif motif lies at 166–194; sequence QLDQEYKINSRLLQNILDAGFQVPTPIQM. One can recognise a Helicase ATP-binding domain in the interval 197-375; sequence IPVMLHGREL…KLNLDNVVSV (179 aa). Residue 210 to 217 coordinates ATP; it reads APTGSGKT. The DEAD box signature appears at 319-322; that stretch reads DESD. The Helicase C-terminal domain occupies 386-547; the sequence is TVEQELLFVG…PVPEYIKGFQ (162 aa).

Belongs to the DEAD box helicase family. DDX52/ROK1 subfamily.

The protein localises to the nucleus. It localises to the nucleolus. The enzyme catalyses ATP + H2O = ADP + phosphate + H(+). In terms of biological role, required for efficient ribosome biogenesis. May control cell cycle progression by regulating translation of mRNAs that contain a terminal oligo pyrimidine (TOP) motif in their 5' UTRs, such as GTPBP4. This is Probable ATP-dependent RNA helicase DDX52 (Ddx52) from Mus musculus (Mouse).